The sequence spans 158 residues: Glycine/sarcosine/betaine reductase complex component A1 (158 aa).

Sec46 is a catalytic residue. A non-standard amino acid (selenocysteine) is located at residue Sec46.

The protein belongs to the GrdA family. As to quaternary structure, monomer. Component of the glycine, sarcosine and betaine reductase complexes, together with components B and C.

It catalyses the reaction acetyl phosphate + [thioredoxin]-disulfide + NH4(+) + H2O = [thioredoxin]-dithiol + glycine + phosphate + H(+). The catalysed reaction is acetyl phosphate + methylamine + [thioredoxin]-disulfide + H2O = sarcosine + [thioredoxin]-dithiol + phosphate + H(+). It carries out the reaction acetyl phosphate + trimethylamine + [thioredoxin]-disulfide + H2O = glycine betaine + [thioredoxin]-dithiol + phosphate + H(+). In terms of biological role, in the first step of glycine, betaine and sarcosine reductases, the substrate is bound to component PB via a Schiff base intermediate. Then the PB-activated substrate is nucleophilically attacked by the selenol anion of component PA to transform it to a carboxymethylated selenoether and the respective amine. By action of component PC, acetyl phosphate is formed, leaving component PA in its oxidized state. Finally component PA becomes reduced by the thioredoxin system to start a new catalytic cycle of reductive deamination. The polypeptide is Glycine/sarcosine/betaine reductase complex component A1 (grdA1) (Photobacterium profundum (strain SS9)).